The sequence spans 72 residues: Translation initiation factor IF-1 (72 aa).

The S1-like domain maps to 1–72 (MAKDDVIEVE…TRGRITYRYK (72 aa)). Tyrosine 60 carries the phosphotyrosine modification.

Belongs to the IF-1 family. In terms of assembly, component of the 30S ribosomal translation pre-initiation complex which assembles on the 30S ribosome in the order IF-2 and IF-3, IF-1 and N-formylmethionyl-tRNA(fMet); mRNA recruitment can occur at any time during PIC assembly.

The protein localises to the cytoplasm. Functionally, one of the essential components for the initiation of protein synthesis. Stabilizes the binding of IF-2 and IF-3 on the 30S subunit to which N-formylmethionyl-tRNA(fMet) subsequently binds. Helps modulate mRNA selection, yielding the 30S pre-initiation complex (PIC). Upon addition of the 50S ribosomal subunit IF-1, IF-2 and IF-3 are released leaving the mature 70S translation initiation complex. The protein is Translation initiation factor IF-1 of Bacillus pumilus (strain SAFR-032).